A 462-amino-acid chain; its full sequence is tRNA modification GTPase MnmE (462 aa).

3 residues coordinate (6S)-5-formyl-5,6,7,8-tetrahydrofolate: R27, E89, and R128. The TrmE-type G domain maps to 223–383; that stretch reads GLKIAIVGRP…LEAAILAAVG (161 aa). GTP contacts are provided by residues 233 to 238, 252 to 258, and 277 to 280; these read NVGKSS, TDLPGRT, and DTAG. Residues S237 and T258 each contribute to the Mg(2+) site. K462 provides a ligand contact to (6S)-5-formyl-5,6,7,8-tetrahydrofolate.

The protein belongs to the TRAFAC class TrmE-Era-EngA-EngB-Septin-like GTPase superfamily. TrmE GTPase family. Homodimer. Heterotetramer of two MnmE and two MnmG subunits. K(+) serves as cofactor.

It is found in the cytoplasm. Exhibits a very high intrinsic GTPase hydrolysis rate. Involved in the addition of a carboxymethylaminomethyl (cmnm) group at the wobble position (U34) of certain tRNAs, forming tRNA-cmnm(5)s(2)U34. This Synechococcus sp. (strain ATCC 27144 / PCC 6301 / SAUG 1402/1) (Anacystis nidulans) protein is tRNA modification GTPase MnmE.